The primary structure comprises 276 residues: UPF0276 protein CV_3513 (276 aa).

This sequence belongs to the UPF0276 family.

The chain is UPF0276 protein CV_3513 from Chromobacterium violaceum (strain ATCC 12472 / DSM 30191 / JCM 1249 / CCUG 213 / NBRC 12614 / NCIMB 9131 / NCTC 9757 / MK).